A 486-amino-acid chain; its full sequence is NADH-quinone oxidoreductase subunit N (486 aa).

The next 14 membrane-spanning stretches (helical) occupy residues 8–28 (LTAL…ILSI), 36–56 (FVAV…YFLI), 74–94 (ILYI…SYPW), 104–124 (EFYL…ISHH), 125–145 (MASF…LIAY), 160–180 (IILS…VYSI), 201–221 (ILVV…KLSI), 239–259 (VLSF…LNFL), 269–289 (VIYF…NLMA), 298–318 (FLGY…LVSH), 329–349 (AIYL…VNLI), 376–396 (SVLT…GFIG), 410–432 (WLIG…RIIL), and 459–479 (IVIC…NPLI).

Belongs to the complex I subunit 2 family. As to quaternary structure, NDH-1 is composed of 13 different subunits. Subunits NuoA, H, J, K, L, M, N constitute the membrane sector of the complex.

Its subcellular location is the cell membrane. It catalyses the reaction a quinone + NADH + 5 H(+)(in) = a quinol + NAD(+) + 4 H(+)(out). Its function is as follows. NDH-1 shuttles electrons from NADH, via FMN and iron-sulfur (Fe-S) centers, to quinones in the respiratory chain. The immediate electron acceptor for the enzyme in this species is believed to be ubiquinone. Couples the redox reaction to proton translocation (for every two electrons transferred, four hydrogen ions are translocated across the cytoplasmic membrane), and thus conserves the redox energy in a proton gradient. The sequence is that of NADH-quinone oxidoreductase subunit N from Buchnera aphidicola subsp. Acyrthosiphon pisum (strain APS) (Acyrthosiphon pisum symbiotic bacterium).